The following is a 291-amino-acid chain: B3 domain-containing protein At2g16210 (291 aa).

The TF-B3 1 DNA-binding region spans 19-114; sequence FFKVVQSINV…HFTVNIFKLD (96 aa). Over residues 149 to 159 the composition is skewed to polar residues; it reads VSSNRGQTTAA. Residues 149-182 form a disordered region; it reads VSSNRGQTTAAESKGRKLNLGKRAAKESQSSKRT. The segment covering 172–182 has biased composition (basic and acidic residues); the sequence is AAKESQSSKRT. The segment at residues 200 to 291 is a DNA-binding region (TF-B3 2); it reads AAAFTILFKQ…KELLLVVSKP (92 aa).

It localises to the nucleus. The polypeptide is B3 domain-containing protein At2g16210 (Arabidopsis thaliana (Mouse-ear cress)).